Consider the following 485-residue polypeptide: Probable trichothecene esterase SAT6 (485 aa).

The tract at residues Met-1 to Val-23 is disordered. Residues Leu-9–Val-23 are compositionally biased toward low complexity. Active-site charge relay system residues include Ser-262, Asp-406, and His-438.

This sequence belongs to the AB hydrolase superfamily. Lipase family.

It participates in mycotoxin biosynthesis. Its function is as follows. Probable trichothecene esterase; part of the satratoxin SC1 cluster involved in the biosynthesis of satratoxins, trichothecene mycotoxins that are associated with human food poisonings. Satratoxins are suggested to be made by products of multiple gene clusters (SC1, SC2 and SC3) that encode 21 proteins in all, including polyketide synthases, acetyltransferases, and other enzymes expected to modify the trichothecene skeleton. SC1 encodes 10 proteins, SAT1 to SAT10. The largest are SAT8, which encodes a putative polyketide synthase (PKS) with a conventional non-reducing architecture, and SAT10, a putative protein containing four ankyrin repeats and thus may be involved in protein scaffolding. The putative short-chain reductase SAT3 may assist the PKS in some capacity. SAT6 contains a secretory lipase domain and acts probably as a trichothecene esterase. SAT5 encodes a putative acetyltransferase, and so, with SAT6, may affect endogenous protection from toxicity. The probable transcription factor SAT9 may regulate the expression of the SC1 cluster. SC2 encodes proteins SAT11 to SAT16, the largest of which encodes the putative reducing PKS SAT13. SAT11 is a cytochrome P450 monooxygenase, while SAT14 and SAT16 are probable acetyltransferases. The SC2 cluster may be regulated by the transcription factor SAT15. SC3 is a small cluster that encodes 5 proteins, SAT17 to SAT21. SAT21 is a putative MFS-type transporter which may have a role in exporting secondary metabolites. The four other proteins putatively encoded in SC3 include the taurine hydroxylase-like protein SAT17, the O-methyltransferase SAT18, the acetyltransferase SAT19, and the Cys6-type zinc finger SAT20, the latter being probably involved in regulation of SC3 expression. The sequence is that of Probable trichothecene esterase SAT6 from Stachybotrys chartarum (strain CBS 109288 / IBT 7711) (Toxic black mold).